The chain runs to 363 residues: Protein TAX-1 (363 aa).

The interval 129–363 (RYGNAEEILS…IPFRGVAAEQ (235 aa)) is required for localization to the flagellum and for flagellar motility. 2 TPR repeats span residues 157 to 190 (AELH…LSVM) and 199 to 232 (TFAY…WLKH).

Interacts with TTC29.

Its subcellular location is the cytoplasm. The protein resides in the cytoskeleton. It localises to the flagellum axoneme. In terms of biological role, required for flagellum motility. The sequence is that of Protein TAX-1 from Trypanosoma brucei brucei (strain 927/4 GUTat10.1).